The following is a 712-amino-acid chain: Phosphomethylpyrimidine synthase (712 aa).

Residues Ala14–Arg49 form a disordered region. The span at Pro20–Val42 shows a compositional bias: polar residues. Residues Asn283, Met312, Tyr341, His377, Ser397–Gly399, Asp438–Arg441, and Glu477 each bind substrate. Zn(2+) is bound at residue His481. Tyr504 contributes to the substrate binding site. Residue His545 participates in Zn(2+) binding. Residues Cys625, Cys628, and Cys633 each coordinate [4Fe-4S] cluster.

The protein belongs to the ThiC family. In terms of assembly, homodimer. The cofactor is [4Fe-4S] cluster.

It catalyses the reaction 5-amino-1-(5-phospho-beta-D-ribosyl)imidazole + S-adenosyl-L-methionine = 4-amino-2-methyl-5-(phosphooxymethyl)pyrimidine + CO + 5'-deoxyadenosine + formate + L-methionine + 3 H(+). The protein operates within cofactor biosynthesis; thiamine diphosphate biosynthesis. Catalyzes the synthesis of the hydroxymethylpyrimidine phosphate (HMP-P) moiety of thiamine from aminoimidazole ribotide (AIR) in a radical S-adenosyl-L-methionine (SAM)-dependent reaction. The polypeptide is Phosphomethylpyrimidine synthase (Shewanella putrefaciens (strain CN-32 / ATCC BAA-453)).